Consider the following 598-residue polypeptide: Arginine--tRNA ligase (598 aa).

Residues Ala-140–His-150 carry the 'HIGH' region motif.

It belongs to the class-I aminoacyl-tRNA synthetase family. As to quaternary structure, monomer.

Its subcellular location is the cytoplasm. The catalysed reaction is tRNA(Arg) + L-arginine + ATP = L-arginyl-tRNA(Arg) + AMP + diphosphate. The sequence is that of Arginine--tRNA ligase from Synechococcus sp. (strain JA-3-3Ab) (Cyanobacteria bacterium Yellowstone A-Prime).